The primary structure comprises 316 residues: Glycine--tRNA ligase alpha subunit (316 aa).

This sequence belongs to the class-II aminoacyl-tRNA synthetase family. In terms of assembly, tetramer of two alpha and two beta subunits.

It is found in the cytoplasm. It catalyses the reaction tRNA(Gly) + glycine + ATP = glycyl-tRNA(Gly) + AMP + diphosphate. This chain is Glycine--tRNA ligase alpha subunit, found in Paracoccus denitrificans (strain Pd 1222).